A 543-amino-acid polypeptide reads, in one-letter code: EH domain-containing protein 2 (543 aa).

Phosphoserine occurs at positions 3 and 44. In terms of domain architecture, Dynamin-type G spans Phe-55–Pro-286. Positions Gly-65 to Thr-72 are G1 motif. Residue Gly-65–Thr-72 coordinates ATP. The tract at residues Glu-91 to Pro-92 is G2 motif. The tract at residues Asp-153–Gly-156 is G3 motif. Residues Asn-219–Asp-222 are G4 motif. Residue Lys-220 coordinates ATP. A region of interest (G5 motif) is located at residue Val-243. Residue Trp-258 participates in ATP binding. Residues Ser-320 to Ala-340 are mediates membrane-binding. Phosphoserine is present on residues Ser-438, Ser-468, Ser-470, Ser-484, and Ser-493. Positions Asp-449–Arg-537 constitute an EH domain. The region spanning Leu-481–Lys-516 is the EF-hand domain. Ca(2+) is bound by residues Asp-494, Asp-496, Asp-498, Met-500, and Glu-505. A disordered region spans residues Gly-521 to Glu-543. Positions Ser-534 to Glu-543 are enriched in basic residues.

This sequence belongs to the TRAFAC class dynamin-like GTPase superfamily. Dynamin/Fzo/YdjA family. EHD subfamily. In terms of assembly, homodimer and homooligomer. Interacts with EHD1. May also interact with EHD3 and EHD4. Interacts with MYOF. Interacts with EHBP1. Interacts with FER1L5 (via second C2 domain). Interacts with CAV1 in a cholesterol-dependent manner. Interacts (via EH domain) with PACSIN2 (via NPF motifs); this interaction probably stabilizes the caveolae.

It is found in the cell membrane. Its subcellular location is the membrane. The protein localises to the caveola. It localises to the endosome membrane. The protein resides in the cytoplasm. It is found in the cytosol. The very low intrinsic ATPase activity is increased upon interaction with liposomes. Its function is as follows. ATP- and membrane-binding protein that controls membrane reorganization/tubulation upon ATP hydrolysis. Plays a role in membrane trafficking between the plasma membrane and endosomes. Important for the internalization of GLUT4. Required for fusion of myoblasts to skeletal muscle myotubes. Required for normal translocation of FER1L5 to the plasma membrane. Regulates the equilibrium between cell surface-associated and cell surface-dissociated caveolae by constraining caveolae at the cell membrane. This is EH domain-containing protein 2 from Rattus norvegicus (Rat).